Reading from the N-terminus, the 323-residue chain is Acetyl esterase (323 aa).

The short motif at 91 to 93 (HGG) is the Involved in the stabilization of the negatively charged intermediate by the formation of the oxyanion hole element. Residues serine 165, aspartate 262, and histidine 292 contribute to the active site.

Belongs to the 'GDXG' lipolytic enzyme family. Homodimer. Interacts with MalT and MelA.

It localises to the cytoplasm. Displays esterase activity towards short chain fatty esters (acyl chain length of up to 8 carbons). Able to hydrolyze triacetylglycerol (triacetin) and tributyrylglycerol (tributyrin), but not trioleylglycerol (triolein) or cholesterol oleate. Negatively regulates MalT activity by antagonizing maltotriose binding. Inhibits MelA galactosidase activity. The chain is Acetyl esterase from Salmonella agona (strain SL483).